The following is a 194-amino-acid chain: Imidazoleglycerol-phosphate dehydratase (194 aa).

Belongs to the imidazoleglycerol-phosphate dehydratase family.

It is found in the cytoplasm. It carries out the reaction D-erythro-1-(imidazol-4-yl)glycerol 3-phosphate = 3-(imidazol-4-yl)-2-oxopropyl phosphate + H2O. The protein operates within amino-acid biosynthesis; L-histidine biosynthesis; L-histidine from 5-phospho-alpha-D-ribose 1-diphosphate: step 6/9. This chain is Imidazoleglycerol-phosphate dehydratase, found in Caldicellulosiruptor saccharolyticus (strain ATCC 43494 / DSM 8903 / Tp8T 6331).